We begin with the raw amino-acid sequence, 108 residues long: Integration host factor subunit alpha (108 aa).

It belongs to the bacterial histone-like protein family. As to quaternary structure, heterodimer of an alpha and a beta chain.

In terms of biological role, this protein is one of the two subunits of integration host factor, a specific DNA-binding protein that functions in genetic recombination as well as in transcriptional and translational control. The chain is Integration host factor subunit alpha from Methylorubrum populi (strain ATCC BAA-705 / NCIMB 13946 / BJ001) (Methylobacterium populi).